We begin with the raw amino-acid sequence, 535 residues long: Flavonoid 3'-monooxygenase CYP75B4 (535 aa).

A helical membrane pass occupies residues 8–28 (ISTSLLLTTVALSVIVCYALV). Cysteine 469 lines the heme pocket.

The protein belongs to the cytochrome P450 family. Heme is required as a cofactor.

Its subcellular location is the membrane. The catalysed reaction is a 3'-unsubstituted flavone + reduced [NADPH--hemoprotein reductase] + O2 = a 3'-hydroxyflavone + oxidized [NADPH--hemoprotein reductase] + H2O + H(+). Its pathway is secondary metabolite biosynthesis; flavonoid biosynthesis. Its function is as follows. Catalyzes the 3'-hydroxylation of the flavonoid B-ring to the 3',4'-hydroxylated state. Catalyzes in vitro 3'-hydroxylation of different flavonoids. Catalyzes the conversion of apigenin to luteolin, naringenin to eriodictyol, and kaempferol to quercetin. Possesses specific 5'-hydroxylase activity toward chrysoeriol (a 3'-methoxylated flavone) and is indispensable for tricin formation. Converts chrysoeriol to selgin, a precursor of tricin, suggesting that chrysoeriol, instead of tricetin, is an intermediate in tricin biosynthesis. The polypeptide is Flavonoid 3'-monooxygenase CYP75B4 (Oryza sativa subsp. japonica (Rice)).